The following is a 465-amino-acid chain: ATP-dependent protease ATPase subunit HslU (465 aa).

Residues V19, 61-66 (GVGKTE), D277, E343, and R415 contribute to the ATP site.

The protein belongs to the ClpX chaperone family. HslU subfamily. In terms of assembly, a double ring-shaped homohexamer of HslV is capped on each side by a ring-shaped HslU homohexamer. The assembly of the HslU/HslV complex is dependent on binding of ATP.

Its subcellular location is the cytoplasm. In terms of biological role, ATPase subunit of a proteasome-like degradation complex; this subunit has chaperone activity. The binding of ATP and its subsequent hydrolysis by HslU are essential for unfolding of protein substrates subsequently hydrolyzed by HslV. HslU recognizes the N-terminal part of its protein substrates and unfolds these before they are guided to HslV for hydrolysis. This chain is ATP-dependent protease ATPase subunit HslU, found in Geobacillus sp. (strain WCH70).